Here is a 1600-residue protein sequence, read N- to C-terminus: MAAAAVVVPAEWIKNWEKSGRGEFLHLCRILSENKSHDSSTYRDFQQALYELSYHVIKGNLKHEQASNVLNDISEFREDMPSILADVFCILDIETNCLEEKSKRDYFTQLVLACLYLVSDTVLKERLDPETLESLGLIKQSQQFNQKSVKIKTKLFYKQQKFNLLREENEGYAKLIAELGQDLSGSITSDLILENIKSLIGCFNLDPNRVLDVILEVFECRPEHDDFFISLLESYMSMCEPQTLCHILGFKFKFYQEPNGETPSSLYRVAAVLLQFNLIDLDDLYVHLLPADNCIMDEHKREIAEAKQIVRKLTMVVLSSEKMDDREKEKEKEEEKVEKPPDNQKLGLLEALLKIGDWQHAQNIMDQMPPYYAASHKLIALAICKLIHITIEPLYRRVGVPKGAKGSPVNALQNKRAPKQAESFEDLRRDVFNMFCYLGPHLSHDPILFAKVVRIGKSFMKEFQSDGSKQEDKEKTEVILSCLLSITDQVLLPSLSLMDCNACMSEELWGMFKTFPYQHRYRLYGQWKNETYNSHPLLVKVKAQTIDRAKYIMKRLTKENVKPSGRQIGKLSHSNPTILFDYILSQIQKYDNLIIPVVDSLKYLTSLNYDVLAYCIIEALANPEKERMKHDDTTISSWLQSLASFCGAVFRKYPIDLAGLLQYVANQLKAGKSFDLLILKEVVQKMAGIEITEEMTMEQLEAMTGGEQLKAEGGYFGQIRNTKKSSQRLKDALLDHDLALPLCLLMAQQRNGVIFQEGGEKHLKLVGKLYDQCHDTLVQFGGFLASNLSTEDYIKRVPSIDVLCNEFHTPHDAAFFLSRPMYAHHISSKYDELKKSEKGSKQQHKVHKYITSCEMVMAPVHEAVVSLHVSKVWDDISPQFYATFWSLTMYDLAVPHTSYEREVNKLKVQMKAIDDNQEMPPNKKKKEKERCTALQDKLLEEEKKQMEHVQRVLQRLKLEKDNWLLAKSTKNETITKFLQLCIFPRCIFSAIDAVYCARFVELVHQQKTPNFSTLLCYDRVFSDIIYTVASCTENEASRYGRFLCCMLETVTRWHSDRATYEKECGNYPGFLTILRATGFDGGNKADQLDYENFRHVVHKWHYKLTKASVHCLETGEYTHIRNILIVLTKILPWYPKVLNLGQALERRVHKICQEEKEKRPDLYALAMGYSGQLKSRKSYMIPENEFHHKDPSPRNAVASVQNGPGCGPSPSSTGSTSKSDESSAEETDKSRERSQCGVKAVNKASSTTPKGNSSNGNSGSNSNKAVKENDKEKGKEKEKEKKEKTPATTPEARILGKDGKEKPKEERPNKDEKARETKERTPKSDKEKEKFKKEEKVKDEKFKTTVPNAESKSSQEREREKEPSRERDIAKEMKSKENVKGGEKTPVSGSLKSPVPRSDIPEPEREQKRRKIDTHPSPSHSSTVKDSLIELKESSAKLYINHTPPPLSKSKEREMDKKDLDKSRERSREREKKDEKDRKERKRDHSNSDREVPPDLTKRRKEENGTMGVSKHKSESPCESPYPNEKDKEKNKSKSSGKEKGSDSFKSEKMDKISSGGKKESRHDKEKIEKKEKRDSSGGKEEKKQYPFHLDVFSQYNGKL.

The anchor domain; interaction with THOC5 and THOC7 stretch occupies residues Met1–Asn163. A bow domain; interaction with THOC1 dock domain and THOC3 region spans residues Leu164–Ser534. A coiled-coil region spans residues Asn293 to Lys339. The tract at residues Glu321–Pro341 is disordered. An MIF4G domain; interaction with THOC3 and DDX39B region spans residues His535–Met686. Positions Ala687 to Lys1174 are stern domain. A coiled-coil region spans residues His896–Leu965. Positions Lys923–Lys928 match the Nuclear localization signal motif. The charged domain stretch occupies residues Ser1175–Asn1597. Residues Asn1184–Leu1600 form a disordered region. Low complexity predominate over residues Pro1208–Ser1217. Residues Lys1218–Ser1234 show a composition bias toward basic and acidic residues. Position 1222 is a phosphoserine (Ser1222). The segment covering Gly1251–Asn1263 has biased composition (low complexity). Basic and acidic residues-rich tracts occupy residues Ala1265 to Thr1285, Ile1294 to Lys1343, and Ser1353 to Glu1383. Position 1385 is a phosphothreonine (Thr1385). Residues Ser1390, Ser1393, and Ser1417 each carry the phosphoserine modification. Positions Pro1416–Lys1425 are enriched in polar residues. Position 1443 is a phosphothreonine (Thr1443). Basic and acidic residues predominate over residues Lys1449–Asn1504. A phosphoserine mark is found at Ser1450, Ser1486, and Ser1516. A coiled-coil region spans residues Arg1464–Glu1491. Residues Asn1524–Gln1585 show a composition bias toward basic and acidic residues.

The protein belongs to the THOC2 family. As to quaternary structure, component of the THO subcomplex, which is composed of THOC1, THOC2, THOC3, THOC5, THOC6 and THOC7. The THO subcomplex interacts with DDX39B to form the THO-DDX39B complex which multimerizes into a 28-subunit tetrameric assembly. Component of the transcription/export (TREX) complex at least composed of ALYREF/THOC4, DDX39B, SARNP/CIP29, CHTOP and the THO subcomplex; in the complex interacts with THOC1, THOC3, THOC5, THOC7 and DDX39B. TREX seems to have a dynamic structure involving ATP-dependent remodeling. Interacts with POLDIP3 and ZC3H11A.

The protein localises to the nucleus. It is found in the nucleus speckle. It localises to the cytoplasm. Component of the THO subcomplex of the TREX complex which is thought to couple mRNA transcription, processing and nuclear export, and which specifically associates with spliced mRNA and not with unspliced pre-mRNA. Required for efficient export of polyadenylated RNA and spliced mRNA. The THOC1-THOC2-THOC3 core complex alone is sufficient to bind export factor NXF1-NXT1 and promote ATPase activity of DDX39B; in the complex THOC2 is the only component that directly interacts with DDX39B. TREX is recruited to spliced mRNAs by a transcription-independent mechanism, binds to mRNA upstream of the exon-junction complex (EJC) and is recruited in a splicing- and cap-dependent manner to a region near the 5' end of the mRNA where it functions in mRNA export to the cytoplasm via the TAP/NXF1 pathway. Required for NXF1 localization to the nuclear rim. THOC2 (and probably the THO complex) is involved in releasing mRNA from nuclear speckle domains. Plays a role for proper neuronal development. This Plecturocebus moloch (Dusky titi monkey) protein is THO complex subunit 2 (THOC2).